We begin with the raw amino-acid sequence, 84 residues long: Beta-defensin 119 (84 aa).

The signal sequence occupies residues 1 to 21; the sequence is MKLLYLFLAILLAIEEPVISG. 3 cysteine pairs are disulfide-bonded: Cys-28–Cys-55, Cys-35–Cys-49, and Cys-39–Cys-56.

This sequence belongs to the beta-defensin family.

Its subcellular location is the secreted. Functionally, has antibacterial activity. This Gorilla gorilla gorilla (Western lowland gorilla) protein is Beta-defensin 119 (DEFB119).